Consider the following 122-residue polypeptide: Large ribosomal subunit protein uL14 (122 aa).

This sequence belongs to the universal ribosomal protein uL14 family. Part of the 50S ribosomal subunit. Forms a cluster with proteins L3 and L19. In the 70S ribosome, L14 and L19 interact and together make contacts with the 16S rRNA in bridges B5 and B8.

In terms of biological role, binds to 23S rRNA. Forms part of two intersubunit bridges in the 70S ribosome. The chain is Large ribosomal subunit protein uL14 from Campylobacter hominis (strain ATCC BAA-381 / DSM 21671 / CCUG 45161 / LMG 19568 / NCTC 13146 / CH001A).